The following is a 1955-amino-acid chain: Protocadherin-15 (1955 aa).

The N-terminal stretch at 1 to 26 (MFRQFYLWTCLASGIILGSLFEICLG) is a signal peptide. The Extracellular portion of the chain corresponds to 27–1376 (QYDDDCKLAR…GESLGYTEGA (1350 aa)). A disulfide bond links cysteine 32 and cysteine 120. 11 Cadherin domains span residues 40–147 (PATI…SPTF), 148–265 (KHES…GPMF), 278–395 (RPLT…SPYF), 396–509 (TMPS…TPTF), 510–616 (PEIS…PPRF), 617–717 (PQLM…APVF), 719–819 (PYLP…SPVF), 820–926 (TNST…PPVF), 927–1035 (SKRI…IPRF), 1037–1144 (QEEY…PPVF), and 1145–1259 (QKKF…PPTL). Residues asparagine 52, asparagine 97, and asparagine 201 are each glycosylated (N-linked (GlcNAc...) asparagine). Residues asparagine 419, asparagine 559, asparagine 662, asparagine 724, asparagine 768, asparagine 821, and asparagine 851 are each glycosylated (N-linked (GlcNAc...) asparagine). N-linked (GlcNAc...) asparagine glycans are attached at residues asparagine 1064, asparagine 1084, and asparagine 1175. A helical membrane pass occupies residues 1377 to 1397 (LLALAFIIILCCIPAILVVLV). The Cytoplasmic portion of the chain corresponds to 1398-1955 (SYRQFKVRQA…KQSHSQSTSL (558 aa)). Over residues 1426–1444 (VPAPAPVAAPPPPPPPPPG) the composition is skewed to pro residues. Disordered regions lie at residues 1426–1446 (VPAPAPVAAPPPPPPPPPGAH), 1601–1623 (QGTRQKAENENTGICTNKRGSSN), 1745–1766 (CPLPPPPPISPPSPPPAPAPLA), and 1928–1955 (ITSEQNKGSLNNIVEGTEKQSHSQSTSL). Over residues 1928–1941 (ITSEQNKGSLNNIV) the composition is skewed to polar residues.

As to quaternary structure, antiparallel heterodimer with CDH23. Found in a complex with TMIE and LHFPL5. Interacts with LHFPL5/TMHS; this interaction is required for efficient localization to hair bundles. Interacts with MYO7A. Interacts with USH1G; this interaction may recruit USH1G to the plasma membrane. Interacts with TOMT. Isoforms CD1 and CD3 interact with TMC1 (via N-terminus) and TMC2 (via N-terminus). Expressed in brain, lung, kidney, spleen and testis. Found also in the inner and outer synaptic layers, and the nerve fiber layer in adult and fetal retinas. Found in the supporting cells, outer sulcus cells and spiral ganglion of fetal cochlea. Expressed in cytotoxic tumor-derived T- and NK-cell lines as well as biopsies of nasal NK/T-cell lymphomas. Not detected in normal or in vitro activated peripheral blood cells, CD4 or CD8 lymphocytes or NK cells. Isoform 3 is expressed in brain, heart, cerebellum and kidney. CD1 isoforms, such as isoform 1, have a limited pattern of expression and is detected in testis, retina and cochlea. CD2 isoforms, such as isoforms 4 and 5, are expressed in heart, kidney, thymus, spleen, testis, retina and cochlea. CD3 isoforms, such as isoform 6, are widely expressed.

The protein resides in the cell membrane. It localises to the secreted. Calcium-dependent cell-adhesion protein. Essential for maintenance of normal retinal and cochlear function. This is Protocadherin-15 (PCDH15) from Homo sapiens (Human).